The chain runs to 317 residues: Transaldolase 1 (317 aa).

K132 acts as the Schiff-base intermediate with substrate in catalysis.

This sequence belongs to the transaldolase family. Type 1 subfamily. As to quaternary structure, homodimer.

It is found in the cytoplasm. It carries out the reaction D-sedoheptulose 7-phosphate + D-glyceraldehyde 3-phosphate = D-erythrose 4-phosphate + beta-D-fructose 6-phosphate. The protein operates within carbohydrate degradation; pentose phosphate pathway; D-glyceraldehyde 3-phosphate and beta-D-fructose 6-phosphate from D-ribose 5-phosphate and D-xylulose 5-phosphate (non-oxidative stage): step 2/3. In terms of biological role, transaldolase is important for the balance of metabolites in the pentose-phosphate pathway. The chain is Transaldolase 1 from Salmonella paratyphi A (strain ATCC 9150 / SARB42).